The following is an 82-amino-acid chain: uncharacterized protein (82 aa).

It to M.thermoautotrophicum MTH386.

This is an uncharacterized protein from Methanocaldococcus jannaschii (strain ATCC 43067 / DSM 2661 / JAL-1 / JCM 10045 / NBRC 100440) (Methanococcus jannaschii).